Here is a 398-residue protein sequence, read N- to C-terminus: Phosphoglycerate kinase (398 aa).

Substrate-binding positions include 21 to 23 (DFN), Arg-36, 59 to 62 (HFGR), Arg-117, and Arg-150. ATP is bound by residues Lys-200, Glu-321, and 351–354 (GGDS).

This sequence belongs to the phosphoglycerate kinase family. In terms of assembly, monomer.

It localises to the cytoplasm. The catalysed reaction is (2R)-3-phosphoglycerate + ATP = (2R)-3-phospho-glyceroyl phosphate + ADP. It participates in carbohydrate degradation; glycolysis; pyruvate from D-glyceraldehyde 3-phosphate: step 2/5. In Wolbachia sp. subsp. Drosophila simulans (strain wRi), this protein is Phosphoglycerate kinase.